The chain runs to 1091 residues: Error-prone DNA polymerase 1 (1091 aa).

The span at arginine 1051–arginine 1064 shows a compositional bias: basic and acidic residues. The disordered stretch occupies residues arginine 1051–valine 1080.

It belongs to the DNA polymerase type-C family. DnaE2 subfamily.

The protein resides in the cytoplasm. The enzyme catalyses DNA(n) + a 2'-deoxyribonucleoside 5'-triphosphate = DNA(n+1) + diphosphate. DNA polymerase involved in damage-induced mutagenesis and translesion synthesis (TLS). It is not the major replicative DNA polymerase. The protein is Error-prone DNA polymerase 1 of Agrobacterium fabrum (strain C58 / ATCC 33970) (Agrobacterium tumefaciens (strain C58)).